A 175-amino-acid polypeptide reads, in one-letter code: Ribulose bisphosphate carboxylase small subunit, chloroplastic (175 aa).

Residues 1–46 constitute a chloroplast transit peptide; sequence MAPTVMASSATSVAPFQGLKSTAGLPVSRRSNGASLGSVSNGGRIR.

It belongs to the RuBisCO small chain family. Heterohexadecamer of 8 large and 8 small subunits.

The protein resides in the plastid. It localises to the chloroplast. Its function is as follows. RuBisCO catalyzes two reactions: the carboxylation of D-ribulose 1,5-bisphosphate, the primary event in carbon dioxide fixation, as well as the oxidative fragmentation of the pentose substrate. Both reactions occur simultaneously and in competition at the same active site. Although the small subunit is not catalytic it is essential for maximal activity. This Aegilops tauschii (Tausch's goatgrass) protein is Ribulose bisphosphate carboxylase small subunit, chloroplastic.